The following is a 467-amino-acid chain: 3-isopropylmalate dehydratase large subunit (467 aa).

The [4Fe-4S] cluster site is built by Cys-347, Cys-407, and Cys-410.

This sequence belongs to the aconitase/IPM isomerase family. LeuC type 1 subfamily. In terms of assembly, heterodimer of LeuC and LeuD. It depends on [4Fe-4S] cluster as a cofactor.

The catalysed reaction is (2R,3S)-3-isopropylmalate = (2S)-2-isopropylmalate. It participates in amino-acid biosynthesis; L-leucine biosynthesis; L-leucine from 3-methyl-2-oxobutanoate: step 2/4. Catalyzes the isomerization between 2-isopropylmalate and 3-isopropylmalate, via the formation of 2-isopropylmaleate. The protein is 3-isopropylmalate dehydratase large subunit of Gloeothece citriformis (strain PCC 7424) (Cyanothece sp. (strain PCC 7424)).